Here is a 238-residue protein sequence, read N- to C-terminus: CD63 antigen (238 aa).

The Cytoplasmic segment spans residues 1 to 11 (MAVEGGMKCVK). Residues 12 to 32 (FLLYVLLLAFCACAVGLIAIG) traverse the membrane as a helical segment. Topologically, residues 33 to 51 (VAVQVVLKQAITHETTAGS) are extracellular. A helical transmembrane segment spans residues 52-72 (LLPVVIIAVGAFLFLVAFVGC). At 73 to 81 (CGACKENYC) the chain is on the cytoplasmic side. The chain crosses the membrane as a helical span at residues 82-102 (LMITFAIFLSLIMLVEVAVAI). Residues 103–203 (AGYVFRDQVK…TIAIWLRKNI (101 aa)) are Extracellular-facing. N-linked (GlcNAc...) asparagine glycans are attached at residues Asn-116, Asn-130, Asn-150, and Asn-172. A helical transmembrane segment spans residues 204 to 224 (LLVAAAALGIAFVEVLGIIFS). The Cytoplasmic portion of the chain corresponds to 225-238 (CCLVKSIRSGYEVM). Residues 234–238 (GYEVM) carry the Lysosomal targeting motif motif.

Belongs to the tetraspanin (TM4SF) family. In terms of assembly, interacts with TIMP1 and ITGB1 and recruits TIMP1 to ITGB1. Interacts with CD9. Identified in a complex with CD9 and ITGB3. Interacts with PMEL. Interacts with KDR/VEGFR2; identified in a complex with ITGB1 and KDR/VEGFR2 and is required to recruit KDR to ITGB1 complexes. Interacts with SYT7. In terms of processing, palmitoylated at a low, basal level in unstimulated platelets. The level of palmitoylation increases when platelets are activated by thrombin (in vitro). Ubiquitous. Strongly expressed in kidney. Detected in spleen, bone marrow, peripheral blood mononuclear cells and macrophages.

The protein resides in the cell membrane. Its subcellular location is the lysosome membrane. The protein localises to the late endosome membrane. It is found in the endosome. It localises to the multivesicular body. The protein resides in the melanosome. Its subcellular location is the secreted. The protein localises to the extracellular exosome. It is found in the cell surface. In terms of biological role, functions as a cell surface receptor for TIMP1 and plays a role in the activation of cellular signaling cascades. Plays a role in the activation of ITGB1 and integrin signaling, leading to the activation of AKT, FAK/PTK2 and MAP kinases. Promotes cell survival, reorganization of the actin cytoskeleton, cell adhesion, spreading and migration, via its role in the activation of AKT and FAK/PTK2. Plays a role in VEGFA signaling via its role in regulating the internalization of KDR/VEGFR2. Plays a role in intracellular vesicular transport processes, and is required for normal trafficking of the PMEL luminal domain that is essential for the development and maturation of melanocytes. Plays a role in the adhesion of leukocytes onto endothelial cells via its role in the regulation of SELP trafficking. May play a role in mast cell degranulation in response to Ms4a2/FceRI stimulation, but not in mast cell degranulation in response to other stimuli. The sequence is that of CD63 antigen (Cd63) from Mus musculus (Mouse).